The following is a 272-amino-acid chain: Shikimate dehydrogenase (NADP(+)) (272 aa).

Shikimate contacts are provided by residues 14 to 16 and T61; that span reads SKS. K65 acts as the Proton acceptor in catalysis. Position 77 (E77) interacts with NADP(+). Shikimate is bound by residues N86 and D102. NADP(+)-binding positions include 126-130, 149-154, and M213; these read GAGGA and NRTVSR. Y215 serves as a coordination point for shikimate. G237 contacts NADP(+).

The protein belongs to the shikimate dehydrogenase family. As to quaternary structure, homodimer.

The enzyme catalyses shikimate + NADP(+) = 3-dehydroshikimate + NADPH + H(+). The protein operates within metabolic intermediate biosynthesis; chorismate biosynthesis; chorismate from D-erythrose 4-phosphate and phosphoenolpyruvate: step 4/7. In terms of biological role, involved in the biosynthesis of the chorismate, which leads to the biosynthesis of aromatic amino acids. Catalyzes the reversible NADPH linked reduction of 3-dehydroshikimate (DHSA) to yield shikimate (SA). This Escherichia coli O81 (strain ED1a) protein is Shikimate dehydrogenase (NADP(+)).